Reading from the N-terminus, the 469-residue chain is UDP-N-acetylmuramate--L-alanine ligase (469 aa).

112–118 (GTHGKTT) provides a ligand contact to ATP.

The protein belongs to the MurCDEF family.

It localises to the cytoplasm. The catalysed reaction is UDP-N-acetyl-alpha-D-muramate + L-alanine + ATP = UDP-N-acetyl-alpha-D-muramoyl-L-alanine + ADP + phosphate + H(+). It participates in cell wall biogenesis; peptidoglycan biosynthesis. Functionally, cell wall formation. The polypeptide is UDP-N-acetylmuramate--L-alanine ligase (Methylibium petroleiphilum (strain ATCC BAA-1232 / LMG 22953 / PM1)).